Here is a 297-residue protein sequence, read N- to C-terminus: Cbb3-type cytochrome c oxidase subunit CcoP (297 aa).

Topologically, residues 1–35 are cytoplasmic; it reads MSKKPTTKKEVQTTGHSWDGIEELNTPLPRWWLWT. Residues 36–56 form a helical membrane-spanning segment; the sequence is FYATIVWGVAYSIAMPAWPIF. The Periplasmic portion of the chain corresponds to 57–297; the sequence is ASGATPGILG…SYVHSLGGGQ (241 aa). 2 Cytochrome c domains span residues 108–199 and 206–294; these read YTRN…LKIS and ARAT…HSLG. Heme c-binding residues include Cys121, Cys124, His125, Met174, Cys219, Cys222, His223, and Met264.

This sequence belongs to the CcoP / FixP family. As to quaternary structure, component of the cbb3-type cytochrome c oxidase at least composed of CcoN, CcoO, CcoQ and CcoP. Interacts with CcoH (via transmembrane domain). Heme c serves as cofactor.

The protein localises to the cell inner membrane. It participates in energy metabolism; oxidative phosphorylation. C-type cytochrome. Part of the cbb3-type cytochrome c oxidase complex. CcoP subunit is required for transferring electrons from donor cytochrome c via its heme groups to CcoO subunit. From there, electrons are shuttled to the catalytic binuclear center of CcoN subunit where oxygen reduction takes place. The complex also functions as a proton pump. The polypeptide is Cbb3-type cytochrome c oxidase subunit CcoP (Rhodobacter capsulatus (strain ATCC BAA-309 / NBRC 16581 / SB1003)).